Consider the following 692-residue polypeptide: Elongation factor G 2 (692 aa).

One can recognise a tr-type G domain in the interval 8-283 (EKTRNIGIMA…SVVAYLPSPL (276 aa)). GTP contacts are provided by residues 17–24 (AHIDAGKT), 81–85 (DTPGH), and 135–138 (NKMD).

It belongs to the TRAFAC class translation factor GTPase superfamily. Classic translation factor GTPase family. EF-G/EF-2 subfamily.

The protein resides in the cytoplasm. Its function is as follows. Catalyzes the GTP-dependent ribosomal translocation step during translation elongation. During this step, the ribosome changes from the pre-translocational (PRE) to the post-translocational (POST) state as the newly formed A-site-bound peptidyl-tRNA and P-site-bound deacylated tRNA move to the P and E sites, respectively. Catalyzes the coordinated movement of the two tRNA molecules, the mRNA and conformational changes in the ribosome. This Geobacter sulfurreducens (strain ATCC 51573 / DSM 12127 / PCA) protein is Elongation factor G 2.